The chain runs to 415 residues: Serine/threonine transporter SstT (415 aa).

Helical transmembrane passes span 23–43 (ILIG…AAIA), 47–67 (LGTL…LMLV), 85–105 (ILFL…LFSF), 144–164 (ALLN…GFAL), 181–201 (AVTF…FGLV), 220–240 (LLVL…LLVF), 293–313 (IPLG…VLTL), and 333–353 (VVAS…LLLI).

The protein belongs to the dicarboxylate/amino acid:cation symporter (DAACS) (TC 2.A.23) family.

It is found in the cell inner membrane. It catalyses the reaction L-serine(in) + Na(+)(in) = L-serine(out) + Na(+)(out). The catalysed reaction is L-threonine(in) + Na(+)(in) = L-threonine(out) + Na(+)(out). Involved in the import of serine and threonine into the cell, with the concomitant import of sodium (symport system). This is Serine/threonine transporter SstT from Klebsiella pneumoniae (strain 342).